The following is a 127-amino-acid chain: Fluoride-specific ion channel FluC (127 aa).

A run of 4 helical transmembrane segments spans residues 7–27 (LLVALGGALGSLLRYGLGAWV), 31–51 (LGAGFPWSTLFVNALGSFLIG), 68–88 (LFLAVGVLGGFTTFSSLSYET), and 97–117 (VGKALLYAFGSLFLGLLLAFL). Na(+) is bound by residues G76 and T79.

Belongs to the fluoride channel Fluc/FEX (TC 1.A.43) family.

It is found in the cell inner membrane. The catalysed reaction is fluoride(in) = fluoride(out). Na(+) is not transported, but it plays an essential structural role and its presence is essential for fluoride channel function. Functionally, fluoride-specific ion channel. Important for reducing fluoride concentration in the cell, thus reducing its toxicity. The sequence is that of Fluoride-specific ion channel FluC from Thermus thermophilus (strain ATCC BAA-163 / DSM 7039 / HB27).